Consider the following 363-residue polypeptide: Protein-arginine kinase (363 aa).

One can recognise a Phosphagen kinase C-terminal domain in the interval 24–254; the sequence is IVLSSRIRLA…AQLIEQERSA (231 aa). 27 to 31 is a binding site for ATP; it reads SSRIR. Phosphoarginine; by autocatalysis occurs at positions 29, 40, and 86. ATP is bound by residues H92, R125, and 176 to 180; that span reads RASVM. R190 carries the phosphoarginine; by autocatalysis modification. Position 207-212 (207-212) interacts with ATP; that stretch reads RGIYGE. Phosphoarginine; by autocatalysis occurs at positions 255, 269, and 272. The RDXXRA motif of the pArg binding pocket involved in allosteric regulation motif lies at 337–342; the sequence is RDIRRA. At R346 the chain carries Phosphoarginine; by autocatalysis.

The protein belongs to the ATP:guanido phosphotransferase family. Interacts with CtsR in its autophosphorylated form. Interacts with McsA in nonstressed as well as in heat-stressed cells, whereas strongly interacts with ClpC only in nonstressed cells. In terms of processing, autophosphorylated on Arg residues. Phosphorylation on Arg-40 and Arg-86 are up-regulated upon stress conditions.

The protein resides in the cytoplasm. The enzyme catalyses L-arginyl-[protein] + ATP = N(omega)-phospho-L-arginyl-[protein] + ADP + H(+). Appears to be allosterically activated by the binding of pArg-containing polypeptides to the pArg-binding pocket localized in the C-terminal domain of McsB. The McsB kinase is inhibited in nonstressed cells by direct interaction with ClpC; upon heat exposure, the interaction of McsB with ClpC is dramatically decreased, leading to McsB release and activation during heat stress. Its kinase activity is counteracted by the protein-arginine-phosphatase YwlE in vivo. Requires McsA for full kinase activity. Its function is as follows. Catalyzes the specific phosphorylation of arginine residues in a large number of proteins. Is part of the bacterial stress response system, where it is involved in regulating the global heat shock repressor CtsR; phosphorylates arginine residues in the winged helix-turn-helix domain of CtsR, thereby preventing its binding to DNA and consequently inducing the expression of repressed genes. The transcriptional repressor HrcA, the chaperone GroEL, the unfoldase ClpC, together with several ribosomal subunits, represent other physiological targets of McsB under stress conditions. Protein arginine phosphorylation has a physiologically important role and is involved in the regulation of many critical cellular processes, such as protein homeostasis, motility, competence, and stringent and stress responses, by regulating gene expression and protein activity. Functions as an adapter whose kinase activity is required for ClpCP-mediated degradation of CtsR during heat stress. Is required for the delocalization of competence proteins from the cell poles, probably via a role in the degradation of anchor proteins. The sequence is that of Protein-arginine kinase from Bacillus subtilis (strain 168).